Reading from the N-terminus, the 104-residue chain is MAVKIRLRREGRKKTPMYRIVVADSKAPRDGRFIEILGQYQPRGGENAIALKADRVNHWLNVGALPTDTVRSLLRRAGILKARHEARLAAKLQAAAVALPSGEA.

It belongs to the bacterial ribosomal protein bS16 family.

This chain is Small ribosomal subunit protein bS16, found in Gemmatimonas aurantiaca (strain DSM 14586 / JCM 11422 / NBRC 100505 / T-27).